The following is a 261-amino-acid chain: 22 kDa alpha-zein 8b (261 aa).

Residues 1–16 (LALLALLALFVSATNA) form the signal peptide.

Belongs to the zein family.

Functionally, zeins are major seed storage proteins. This chain is 22 kDa alpha-zein 8b, found in Zea mays (Maize).